The following is a 407-amino-acid chain: MSYPIERVRADFPLLASEVNGQPLAYLDSAASAQKPQSVIEREAEFYRHEYAAVHRGIHTLSAQATSAMEAVREQVAAFINAASVEEIVFVRGTTEAINLVANSYGRTFIQPGDNLIITEMEHHANIVPWQMLAEARGVEVRVLPLAEDGSLDVAQLPGLLDERTRLLAVTQISNVLGALNPVKTMIAQAKAVGAVTLVDGAQSIMHQTVDVQDLDCDFFVFSGHKIYGPSGIGVLYGKRDLLQAMPPWEGGGAMIRQVSLRTGTTYADSPWRFEAGSPNTGGIMGLGAALDYVTALGREEIQRYESSLMKYALEALKQVPDLTLYGPAERHGVIAFNLGQHHAYDVGSFLDRYGIAIRTGHHCAMPLMEHYGVPSMCRASLAVYTTREEIDRLVAGLQRIHRLLGS.

The residue at position 226 (lysine 226) is an N6-(pyridoxal phosphate)lysine. Cysteine 364 (cysteine persulfide intermediate) is an active-site residue.

This sequence belongs to the class-V pyridoxal-phosphate-dependent aminotransferase family. Csd subfamily. Homodimer. Interacts with SufE and the SufBCD complex composed of SufB, SufC and SufD. The interaction with SufE is required to mediate the direct transfer of the sulfur atom from the S-sulfanylcysteine. Requires pyridoxal 5'-phosphate as cofactor.

It localises to the cytoplasm. The catalysed reaction is (sulfur carrier)-H + L-cysteine = (sulfur carrier)-SH + L-alanine. The enzyme catalyses L-selenocysteine + AH2 = hydrogenselenide + L-alanine + A + H(+). Its pathway is cofactor biosynthesis; iron-sulfur cluster biosynthesis. Cysteine desulfurases mobilize the sulfur from L-cysteine to yield L-alanine, an essential step in sulfur metabolism for biosynthesis of a variety of sulfur-containing biomolecules. Component of the suf operon, which is activated and required under specific conditions such as oxidative stress and iron limitation. Acts as a potent selenocysteine lyase in vitro, that mobilizes selenium from L-selenocysteine. Selenocysteine lyase activity is however unsure in vivo. In Pectobacterium carotovorum subsp. carotovorum (strain PC1), this protein is Cysteine desulfurase.